We begin with the raw amino-acid sequence, 422 residues long: MKLLLQNQNIFQKLKNTLNGCIKKFYDTYQDLEQMQKFEMIVEDKLLFRYSCSQSEMFSAQIQAHYLEKRVLQLTDGNVKYIVNFRDKGVLDKANFFDTPNNSLVIIRQWSYEIYYTKNTFQINLVIDEMRCIDIITTIFYCKLELDFTQGIKGISKSSSFSNQIYEYSAQYYKAIQLLKKLLINDSYISELYNSTKSKQQPRLFIFQSFKPKMNLAEQNLSRQFEQCQQDDFGDGCLLQIVNYTHQSLKQIENKNNSNQIVNGQNEISKKKRVLKSNEDLYKISLQKQLKIFQEEEIELHSQSTIRNQTNQQLETFESDTSKRNSEKILHSINELNTSKQKVNQMNSSQHQIQKLENNNLNKNILNQINENDIKNELEERQQQHLTQSFNSKAQLKKIITLKKNQDILLFKPQEQEGSKKY.

As to quaternary structure, component of the telomerase holoenzyme complex, composed of the catalytic core (the catalytic subunit TERT, the telomerase RNA template component TER and TAP65/p65), which is associated with two heterotrimeric subcomplexes: (i) the replication protein A (RPA)-related subcomplex, composed of TEB1, RPA2/TEB2 and RPA3/TEB3 and (ii) the CST-like subcomplex, composed of TAP75/p75, TAP45/p45 and TAP19/p19. TEB1 and the CST-like subcomplex are tethered to the catalytic core by TAP50/p50.

The protein resides in the chromosome. It localises to the telomere. Functionally, tethering component of the holoenzyme telomerase ribonucleoprotein (RNP) complex. Telomerase is an essential ribonucleoprotein enzyme that copies new telomeric repeats onto chromosome ends by repetitively synthesizing the short telomere-repeat sequence 5'-TTGGGG-3' using an RNA template component TER. In the telomerase holoenzyme complex, acts as a hub that anchors the two heterotrimeric subcomplexes with the catalytic core. The chain is Telomerase-associated protein of 50 kDa from Tetrahymena thermophila (strain SB210).